Reading from the N-terminus, the 345-residue chain is KRR1 small subunit processome component homolog (345 aa).

In terms of domain architecture, KH spans 125-193 (DIIKIGNLVH…VRDIVLETMN (69 aa)). Residues 232 to 245 (NISKRKQPKVKKQK) show a composition bias toward basic residues. Disordered stretches follow at residues 232-260 (NISK…ESKV) and 273-329 (QEQK…VDVK). Positions 270-298 (FLNQEQKQAKRNQERTEKQKEAAKRQDER) form a coiled coil. Basic and acidic residues-rich tracts occupy residues 276-302 (KQAK…RNKD) and 315-329 (LKKE…VDVK).

Belongs to the KRR1 family. As to quaternary structure, monomer. Component of the ribosomal small subunit (SSU) processome.

The protein resides in the nucleus. It localises to the nucleolus. In terms of biological role, required for 40S ribosome biogenesis. Involved in nucleolar processing of pre-18S ribosomal RNA and ribosome assembly. Binds to RNA. Required for female germline development, cell viability during eye development and for survival of dividing cells and epithelial cells during early wing disk development. The sequence is that of KRR1 small subunit processome component homolog from Drosophila erecta (Fruit fly).